A 361-amino-acid polypeptide reads, in one-letter code: MSKFSFNIYHQHKKARSGIIVTAHGEMRTPAFMPVGTRGTVKAMLPESVAETGADILLGNTYHLMLQPTAERIVQLGGLHKFMNWDKPILTDSGGFQVMSLSKLCKITEEGVSFSSHINGDKYMLTPERSTEIQYLLGSTITMAFDECTPYPATFEEAKTSMQLTTRWANRSRNAFVKREGYAQFGIIQGSVYEELREQSSKDLVELDFEGYAVGGLAVGEGQELMFKVLDYAPDFLPQNKPRYLMGVGKPADIIGAVSRGIDMFDCVIPTRSGRNGQAFTKYGTVNIRNSKYADDNKPLEHDCLCPACRNYSKAYLHHLVRIGEILGSMLMTWHNLTYFQNLMSRIRAYIKLGKDFDFDS.

Catalysis depends on aspartate 92, which acts as the Proton acceptor. Residues 92–96 (DSGGF), aspartate 146, glutamine 189, and glycine 216 contribute to the substrate site. Positions 247-253 (GVGKPAD) are RNA binding. The Nucleophile role is filled by aspartate 266. The tract at residues 271-275 (TRSGR) is RNA binding; important for wobble base 34 recognition. Zn(2+) contacts are provided by cysteine 304, cysteine 306, cysteine 309, and histidine 335.

This sequence belongs to the queuine tRNA-ribosyltransferase family. Homodimer. Within each dimer, one monomer is responsible for RNA recognition and catalysis, while the other monomer binds to the replacement base PreQ1. Requires Zn(2+) as cofactor.

The enzyme catalyses 7-aminomethyl-7-carbaguanine + guanosine(34) in tRNA = 7-aminomethyl-7-carbaguanosine(34) in tRNA + guanine. It functions in the pathway tRNA modification; tRNA-queuosine biosynthesis. In terms of biological role, catalyzes the base-exchange of a guanine (G) residue with the queuine precursor 7-aminomethyl-7-deazaguanine (PreQ1) at position 34 (anticodon wobble position) in tRNAs with GU(N) anticodons (tRNA-Asp, -Asn, -His and -Tyr). Catalysis occurs through a double-displacement mechanism. The nucleophile active site attacks the C1' of nucleotide 34 to detach the guanine base from the RNA, forming a covalent enzyme-RNA intermediate. The proton acceptor active site deprotonates the incoming PreQ1, allowing a nucleophilic attack on the C1' of the ribose to form the product. After dissociation, two additional enzymatic reactions on the tRNA convert PreQ1 to queuine (Q), resulting in the hypermodified nucleoside queuosine (7-(((4,5-cis-dihydroxy-2-cyclopenten-1-yl)amino)methyl)-7-deazaguanosine). This Rickettsia peacockii (strain Rustic) protein is Queuine tRNA-ribosyltransferase.